Reading from the N-terminus, the 344-residue chain is Beta-1,4-galactosyltransferase 4 (344 aa).

Over 1 to 12 (MGFNLTFHLSYK) the chain is Cytoplasmic. Residues 13–38 (FRLLLLLTLCLTVVGWATSNYFVGAI) traverse the membrane as a helical; Signal-anchor for type II membrane protein segment. The Lumenal segment spans residues 39 to 344 (QEIPKAKEFM…NITVDFWFGA (306 aa)). Cysteines 77 and 118 form a disulfide. Residues 129–133 (PHRNR), 168–170 (FNR), and 195–196 (VD) contribute to the UDP-alpha-D-galactose site. C189 and C208 are oxidised to a cystine. D196 lines the Mn(2+) pocket. A glycan (N-linked (GlcNAc...) asparagine) is linked at N220. Y224 and W256 together coordinate UDP-alpha-D-galactose. 258 to 261 (GEDD) serves as a coordination point for N-acetyl-D-glucosamine. H289 serves as a coordination point for Mn(2+). Position 289–291 (289–291 (HTR)) interacts with UDP-alpha-D-galactose. R301 provides a ligand contact to N-acetyl-D-glucosamine. N335 carries an N-linked (GlcNAc...) asparagine glycan.

This sequence belongs to the glycosyltransferase 7 family. As to quaternary structure, interacts with SLC35A2 (isoform 2; UGT1). Mn(2+) serves as cofactor. Post-translationally, N-glycosylated. In terms of tissue distribution, highest expression is observed in placenta, pancreas, kidney and heart. Expressed in corneal epithelial cells.

It is found in the golgi apparatus membrane. The protein localises to the secreted. The catalysed reaction is N-acetyl-D-glucosamine + UDP-alpha-D-galactose = beta-D-galactosyl-(1-&gt;4)-N-acetyl-D-glucosamine + UDP + H(+). The enzyme catalyses a beta-D-GlcNAc-(1-&gt;3)-beta-D-Gal-(1-&gt;4)-beta-D-Glc-(1&lt;-&gt;1)-Cer(d18:1(4E)) + UDP-alpha-D-galactose = a neolactoside nLc4Cer(d18:1(4E)) + UDP + H(+). It carries out the reaction 3-O-{beta-D-galactosyl-(1-&gt;3)-[6-O-sulfo-N-acetyl-beta-D-glucosaminyl-(1-&gt;6)]-N-acetyl-alpha-D-galactosaminyl}-L-seryl-[protein] + UDP-alpha-D-galactose = 3-O-{beta-D-galactosyl-(1-&gt;3)-[beta-D-galactosyl-(1-&gt;4)-6-O-sulfo-N-acetyl-beta-D-glucosaminyl-(1-&gt;6)]-N-acetyl-alpha-D-galactosaminyl}-L-seryl-[protein] + UDP + H(+). It catalyses the reaction 3-O-{beta-D-galactosyl-(1-&gt;3)-[6-O-sulfo-N-acetyl-beta-D-glucosaminyl-(1-&gt;6)]-N-acetyl-alpha-D-galactosaminyl}-L-threonyl-[protein] + UDP-alpha-D-galactose = 3-O-{beta-D-galactosyl-(1-&gt;3)-[beta-D-galactosyl-(1-&gt;4)-6-O-sulfo-N-acetyl-beta-D-glucosaminyl-(1-&gt;6)]-N-acetyl-alpha-D-galactosaminyl}-L-threonyl-[protein] + UDP + H(+). Its pathway is protein modification; protein glycosylation. It participates in glycolipid biosynthesis. Up-regulated by LALBA. Functionally, galactose (Gal) transferase involved in the synthesis of terminal N-acetyllactosamine (LacNac) unit present on glycan chains of glycoproteins and glycosphingolipids. Catalyzes the transfer of Gal residue via a beta1-&gt;4 linkage from UDP-Gal to the non-reducing terminal N-acetyl glucosamine 6-O-sulfate (6-O-sulfoGlcNAc) in the linearly growing chain of both N- and O-linked keratan sulfate proteoglycans. Cooperates with B3GNT7 N-acetyl glucosamine transferase and CHST6 and CHST1 sulfotransferases to construct and elongate mono- and disulfated disaccharide units [-&gt;3Galbeta1-&gt;4(6-sulfoGlcNAcbeta)1-&gt;] and [-&gt;3(6-sulfoGalbeta)1-&gt;4(6-sulfoGlcNAcbeta)1-&gt;] within keratan sulfate polymer. Transfers Gal residue via a beta1-&gt;4 linkage to terminal 6-O-sulfoGlcNAc within the LacNac unit of core 2 O-glycans forming 6-sulfo-sialyl-Lewis X (sLex). May contribute to the generation of sLex epitope on mucin-type glycoproteins that serve as ligands for SELL/L-selectin, a major regulator of leukocyte migration. In the biosynthesis pathway of neolacto-series glycosphingolipids, transfers Gal residue via a beta1-&gt;4 linkage to terminal GlcNAc of a lactotriaosylceramide (Lc3Cer) acceptor to form a neolactotetraosylceramide. The chain is Beta-1,4-galactosyltransferase 4 from Homo sapiens (Human).